Here is a 1363-residue protein sequence, read N- to C-terminus: Neurexin-1 (1363 aa).

Topologically, residues 1 to 1287 are extracellular; that stretch reads SKRRDMTVFS…EVIRESSSTT (1287 aa). N-linked (GlcNAc...) asparagine glycosylation is present at Asn49. Residues 67–105 enclose the EGF-like 1 domain; it reads QSRLCAREDVCLNGGVCSVLNDQAVCDCSQTGFRGKDCS. 3 disulfide bridges follow: Cys71–Cys83, Cys77–Cys92, and Cys94–Cys104. 2 consecutive Laminin G-like domains span residues 132–329 and 336–528; these read IATF…AFKC and DPIT…KPSC. 3 residues coordinate Ca(2+): Asp178, Leu195, and Met263. Disulfide bonds link Cys293-Cys329, Cys499-Cys528, Cys536-Cys547, Cys541-Cys556, and Cys558-Cys568. The EGF-like 2 domain maps to 532–569; that stretch reads TAKPCLSNPCKNNGVCRDGWNRYVCDCSGTGYLGRSCE. Laminin G-like domains follow at residues 574–747 and 761–936; these read ILSY…IDYC and DPVT…ERGC. The N-linked (GlcNAc...) asparagine glycan is linked to Asn646. Intrachain disulfides connect Cys908–Cys936, Cys943–Cys954, Cys948–Cys963, and Cys965–Cys975. Positions 939–976 constitute an EGF-like 3 domain; sequence PSTTCQEDSCANQGVCLQQWDGFSCDCSMTSFSGPLCN. Residues 982-1180 form the Laminin G-like 5 domain; the sequence is YIFSKGGGQI…DANIVIEGNV (199 aa). Asn1079 is a glycosylation site (N-linked (GlcNAc...) asparagine). A disordered region spans residues 1244–1280; sequence CPSDDEDIDPCEPSSGGLANPTRAGGGREYPGSSEVI. A helical membrane pass occupies residues 1288–1308; the sequence is GMVVGIVAAAALCILILLYAM. Topologically, residues 1309-1363 are cytoplasmic; that stretch reads YKYRNRDEGSYHVDESRNYISNSAQSNGAVIKEKQPNSAKSSNKNKKNKDKEYYV. The segment at 1330–1363 is disordered; that stretch reads NSAQSNGAVIKEKQPNSAKSSNKNKKNKDKEYYV.

It belongs to the neurexin family. The cytoplasmic C-terminal region binds to CASK. The laminin G-like domain 1 binds to NXPH1. Specific isoforms bind to alpha-dystroglycan and to alpha-latrotoxin. Post-translationally, N- and O-glycosylated.

The protein localises to the membrane. Functionally, neuronal cell surface protein that may be involved in cell recognition and cell adhesion. May mediate intracellular signaling. The protein is Neurexin-1 (NRXN1) of Gallus gallus (Chicken).